The chain runs to 314 residues: Ribosomal protein L11 methyltransferase (314 aa).

S-adenosyl-L-methionine contacts are provided by T161, G182, D204, and N248.

It belongs to the methyltransferase superfamily. PrmA family.

It localises to the cytoplasm. It catalyses the reaction L-lysyl-[protein] + 3 S-adenosyl-L-methionine = N(6),N(6),N(6)-trimethyl-L-lysyl-[protein] + 3 S-adenosyl-L-homocysteine + 3 H(+). In terms of biological role, methylates ribosomal protein L11. This chain is Ribosomal protein L11 methyltransferase, found in Listeria innocua serovar 6a (strain ATCC BAA-680 / CLIP 11262).